The sequence spans 267 residues: Tryptophan synthase alpha chain (267 aa).

Active-site proton acceptor residues include Glu-49 and Asp-60.

This sequence belongs to the TrpA family. As to quaternary structure, tetramer of two alpha and two beta chains.

It catalyses the reaction (1S,2R)-1-C-(indol-3-yl)glycerol 3-phosphate + L-serine = D-glyceraldehyde 3-phosphate + L-tryptophan + H2O. It participates in amino-acid biosynthesis; L-tryptophan biosynthesis; L-tryptophan from chorismate: step 5/5. Its function is as follows. The alpha subunit is responsible for the aldol cleavage of indoleglycerol phosphate to indole and glyceraldehyde 3-phosphate. This Rippkaea orientalis (strain PCC 8801 / RF-1) (Cyanothece sp. (strain PCC 8801)) protein is Tryptophan synthase alpha chain.